The primary structure comprises 413 residues: Serpin A12 (413 aa).

Residues 1–20 (MTRMLDLGLFLAGLLTVKGL) form the signal peptide. N-linked (GlcNAc...) asparagine glycosylation is found at N92 and N267. The tract at residues 364-382 (GMEGAAGSGAQTLPMETPR) is reactive center loop.

Belongs to the serpin family. Forms a stable complex with KLK7. Post-translationally, glycosylation slightly decreases affinity for heparin, but otherwise has no significant effect on KLK7 inhibitory activity or thermal stability of the protein. Expressed in visceral adipose tissues.

It localises to the secreted. Inhibition of KLK7 is enhanced by heparin. Functionally, adipokine that modulates insulin action by specifically inhibiting its target protease KLK7 in white adipose tissues. The protein is Serpin A12 (Serpina12) of Mus musculus (Mouse).